The following is a 582-amino-acid chain: ABC transporter-like protein ECU11_1340 (582 aa).

An ABC transporter domain is found at 15–257 (VPNQNLSSNE…LGTKGIHNDG (243 aa)). Residue 47–54 (GTSGSGKT) coordinates ATP. One can recognise an ABC transmembrane type-2 domain in the interval 316 to 519 (YVSFQMAIRQ…EIDAFISNFF (204 aa)). A run of 6 helical transmembrane segments spans residues 335–355 (ILYS…GKYI), 359–378 (FSIA…YVMN), 412–432 (TLVS…FGLI), 436–456 (HAFL…SMLF), 482–502 (GALL…SVIP), and 551–571 (SFLR…SSIL).

This sequence belongs to the ABC transporter superfamily.

The protein localises to the membrane. The sequence is that of ABC transporter-like protein ECU11_1340 from Encephalitozoon cuniculi (strain GB-M1) (Microsporidian parasite).